Consider the following 624-residue polypeptide: Kelch-like ECH-associated protein 1 (624 aa).

A disordered region spans residues 1 to 27; the sequence is MQPEPRPSGAGAHTQFLPLRSQRPEGA. Cys38 bears the S-(2-succinyl)cysteine mark. Positions 77–149 constitute a BTB domain; sequence CDVTLQVKYE…AYTASISMGE (73 aa). Residue Arg135 forms an N5-[4-(S-L-cysteinyl)-5-methyl-1H-imidazol-2-yl]-L-ornithine (Arg-Cys) (interchain with C-151 in KEAP1) linkage. An S-(2-succinyl)cysteine mark is found at Cys151 and Cys241. Residue Cys151 is modified to S-(2,3-dicarboxypropyl)cysteine; alternate. At Cys151 the chain carries S-nitrosocysteine; alternate. Residue Cys151 forms an N5-[4-(S-L-cysteinyl)-5-methyl-1H-imidazol-2-yl]-L-ornithine (Cys-Arg) (interchain with R-135 in KEAP1) linkage. The BACK domain maps to 184 to 286; it reads AIGIANFAEQ…TPHFLQMQLQ (103 aa). S-(2,3-dicarboxypropyl)cysteine is present on residues Cys257 and Cys273. S-(2-succinyl)cysteine occurs at positions 288 and 319. At Cys288 the chain carries S-(2,3-dicarboxypropyl)cysteine; alternate. Kelch repeat units follow at residues 327 to 372, 373 to 423, 424 to 470, 471 to 517, 519 to 564, and 565 to 611; these read LIYT…VVGG, LLYA…VIDG, HIYA…VLNR, LLYA…VLHN, IYAA…VHQG, and RIYV…VTME. An S-cGMP-cysteine modification is found at Cys434. Residue Cys613 is modified to S-(2-succinyl)cysteine.

Belongs to the KEAP1 family. In terms of assembly, component of the BCR(KEAP1) E3 ubiquitin ligase complex, at least composed of 2 molecules of CUL3, 2 molecules of KEAP1, and RBX1. Interacts with NFE2L2/NRF2; the interaction is direct. Forms a ternary complex with NFE2L2/NRF2 and PGAM5. Interacts with (phosphorylated) SQSTM1/p62; the interaction is direct and inactivates the BCR(KEAP1) complex by sequestering it in inclusion bodies, promoting its degradation. Interacts with NFE2L1. Interacts with BPTF and PTMA. Interacts with MAP1LC3B. Interacts indirectly with ENC1. Interacts with SESN1 and SESN2. Interacts with HSP90AA1 and HSP90AB1. Interacts with PGCKA1; this interaction prevents the ubiquitination of KEAP1 by TRIM25, thus protecting KEAP1 protein from degradation. Post-translationally, non-enzymatic covalent modifications of reactive cysteines by electrophile metabolites inactivate the BCR(KEAP1) complex. Accumulation of fumarate promotes the formation of cysteine S-succination (S-(2-succinyl)cysteine), leading to inactivate the BCR(KEAP1) complex and promote NFE2L2/NRF2 nuclear accumulation and activation. Nitric oxide-dependent 8-Nitro-cGMP formation promotes cysteine guanylation (S-cGMP-cysteine), leading to NFE2L2/NRF2 nuclear accumulation and activation. Itaconate, an anti-inflammatory metabolite generated in response to lipopolysaccharide, alkylates cysteines, activating NFE2L2/NRF2. Methylglyoxal, a reactive metabolite that accumulates when the glycolytic enzyme PGK1 is inhibited, promotes formation of a methylimidazole cross-link between proximal Cys-151 and Arg-135 on another KEAP1 molecule, resulting in an inactive dimer that inactivates the BCR(KEAP1) complex. Degraded via a proteasomal-independent process during selective autophagy: interaction with phosphorylated SQSTM1/p62 sequesters KEAP1 in inclusion bodies, leading to its degradation. In terms of processing, auto-ubiquitinated by the BCR(KEAP1) complex. Quinone-induced oxidative stress, but not sulforaphane, increases its ubiquitination. Ubiquitination and subsequent degradation is most pronounced following prolonged exposure of cells to oxidative stress, particularly in glutathione-deficient cells that are highly susceptible to oxidative stress. Deubiquitinated by USP25; leading to stabilization. Ubiquitinated by TRIM25; leading to degradation upon ER stress.

The protein resides in the cytoplasm. It localises to the nucleus. The protein operates within protein modification; protein ubiquitination. With respect to regulation, ubiquitin ligase activity of the BCR(KEAP1) complex is inhibited by oxidative stress and electrophile metabolites such as sulforaphane. Electrophile metabolites react with reactive cysteine residues in KEAP1 and trigger non-enzymatic covalent modifications of these cysteine residues, leading to inactivate the ubiquitin ligase activity of the BCR(KEAP1) complex. Selective autophagy also inactivates the BCR(KEAP1) complex via interaction between KEAP1 and SQSTM1/p62, which sequesters the complex in inclusion bodies and promotes its degradation. In terms of biological role, substrate-specific adapter of a BCR (BTB-CUL3-RBX1) E3 ubiquitin ligase complex that regulates the response to oxidative stress by targeting NFE2L2/NRF2 for ubiquitination. KEAP1 acts as a key sensor of oxidative and electrophilic stress: in normal conditions, the BCR(KEAP1) complex mediates ubiquitination and degradation of NFE2L2/NRF2, a transcription factor regulating expression of many cytoprotective genes. In response to oxidative stress, different electrophile metabolites trigger non-enzymatic covalent modifications of highly reactive cysteine residues in KEAP1, leading to inactivate the ubiquitin ligase activity of the BCR(KEAP1) complex, promoting NFE2L2/NRF2 nuclear accumulation and expression of phase II detoxifying enzymes. In response to selective autophagy, KEAP1 is sequestered in inclusion bodies following its interaction with SQSTM1/p62, leading to inactivation of the BCR(KEAP1) complex and activation of NFE2L2/NRF2. The BCR(KEAP1) complex also mediates ubiquitination of SQSTM1/p62, increasing SQSTM1/p62 sequestering activity and degradation. The BCR(KEAP1) complex also targets BPTF and PGAM5 for ubiquitination and degradation by the proteasome. The chain is Kelch-like ECH-associated protein 1 from Sus scrofa (Pig).